The sequence spans 491 residues: Glutamate--tRNA ligase (491 aa).

The 'HIGH' region signature appears at 13–23 (PSPTGFLHIGN). Residues C110, C112, C137, and H139 each coordinate Zn(2+). Positions 254 to 258 (KLSKR) match the 'KMSKS' region motif. K257 contributes to the ATP binding site.

It belongs to the class-I aminoacyl-tRNA synthetase family. Glutamate--tRNA ligase type 1 subfamily. As to quaternary structure, monomer. Zn(2+) serves as cofactor.

The protein resides in the cytoplasm. It catalyses the reaction tRNA(Glu) + L-glutamate + ATP = L-glutamyl-tRNA(Glu) + AMP + diphosphate. Its function is as follows. Catalyzes the attachment of glutamate to tRNA(Glu) in a two-step reaction: glutamate is first activated by ATP to form Glu-AMP and then transferred to the acceptor end of tRNA(Glu). The chain is Glutamate--tRNA ligase from Listeria monocytogenes serotype 4b (strain F2365).